Here is a 117-residue protein sequence, read N- to C-terminus: Large ribosomal subunit protein bL20 (117 aa).

Belongs to the bacterial ribosomal protein bL20 family.

Functionally, binds directly to 23S ribosomal RNA and is necessary for the in vitro assembly process of the 50S ribosomal subunit. It is not involved in the protein synthesizing functions of that subunit. In Roseiflexus sp. (strain RS-1), this protein is Large ribosomal subunit protein bL20.